The chain runs to 496 residues: Protein nucleotidyltransferase YdiU (496 aa).

Positions 98, 100, 101, 116, 128, 129, 179, and 186 each coordinate ATP. D259 functions as the Proton acceptor in the catalytic mechanism. 2 residues coordinate Mg(2+): N260 and D269. An ATP-binding site is contributed by D269.

It belongs to the SELO family. Requires Mg(2+) as cofactor. The cofactor is Mn(2+).

It catalyses the reaction L-seryl-[protein] + ATP = 3-O-(5'-adenylyl)-L-seryl-[protein] + diphosphate. The catalysed reaction is L-threonyl-[protein] + ATP = 3-O-(5'-adenylyl)-L-threonyl-[protein] + diphosphate. It carries out the reaction L-tyrosyl-[protein] + ATP = O-(5'-adenylyl)-L-tyrosyl-[protein] + diphosphate. The enzyme catalyses L-histidyl-[protein] + UTP = N(tele)-(5'-uridylyl)-L-histidyl-[protein] + diphosphate. It catalyses the reaction L-seryl-[protein] + UTP = O-(5'-uridylyl)-L-seryl-[protein] + diphosphate. The catalysed reaction is L-tyrosyl-[protein] + UTP = O-(5'-uridylyl)-L-tyrosyl-[protein] + diphosphate. Its function is as follows. Nucleotidyltransferase involved in the post-translational modification of proteins. It can catalyze the addition of adenosine monophosphate (AMP) or uridine monophosphate (UMP) to a protein, resulting in modifications known as AMPylation and UMPylation. In Albidiferax ferrireducens (strain ATCC BAA-621 / DSM 15236 / T118) (Rhodoferax ferrireducens), this protein is Protein nucleotidyltransferase YdiU.